Consider the following 227-residue polypeptide: ATP-dependent dethiobiotin synthetase BioD (227 aa).

N13–I18 is a binding site for ATP. T17 is a binding site for Mg(2+). K38 is a catalytic residue. S42 is a binding site for substrate. ATP-binding positions include D55, E117 to G120, N177 to H178, P206 to I208, and N213. Mg(2+) is bound by residues D55 and E117.

Belongs to the dethiobiotin synthetase family. In terms of assembly, homodimer. It depends on Mg(2+) as a cofactor.

It localises to the cytoplasm. It catalyses the reaction (7R,8S)-7,8-diammoniononanoate + CO2 + ATP = (4R,5S)-dethiobiotin + ADP + phosphate + 3 H(+). Its pathway is cofactor biosynthesis; biotin biosynthesis; biotin from 7,8-diaminononanoate: step 1/2. Its function is as follows. Catalyzes a mechanistically unusual reaction, the ATP-dependent insertion of CO2 between the N7 and N8 nitrogen atoms of 7,8-diaminopelargonic acid (DAPA, also called 7,8-diammoniononanoate) to form a ureido ring. This Wigglesworthia glossinidia brevipalpis protein is ATP-dependent dethiobiotin synthetase BioD.